A 318-amino-acid chain; its full sequence is Small ribosomal subunit protein RACK1 (318 aa).

WD repeat units follow at residues 11 to 44 (GHRG…LSWG), 65 to 95 (GHSA…RLWN), 107 to 137 (GHTK…RVWN), 150 to 182 (AHTD…KVWD), 194 to 224 (GHTN…RLWD), 235 to 264 (AAGA…RIFD), and 282 to 315 (KKIV…WGVS).

The protein belongs to the WD repeat G protein beta family. Ribosomal protein RACK1 subfamily.

This Trypanosoma brucei brucei protein is Small ribosomal subunit protein RACK1.